Consider the following 397-residue polypeptide: MRTRSKKTKTVNNNNDLQKSEEKQKFDQLPLDLEIEMFRRLPLKSVARFLTLSKSCATTIRSPSFITSFPSQPCTLIASAATIRTCHNLPSSFKSKDQRLYFFSSSSSSSTVFSTRLTCPLSPYDNLIEYYYHYASGLISIGCNRKQIVTNPSTGRFITLPSVRRRRVVVKSFFGYDPVSDQYKVSCMTERRHGLRQDPSSEHQVFTLGEKKPWKMIDCTSIPDHRPWSNGVCIDGFVYYVAKTGQGMSQLSLMRYALRADNLNLFTSLPEELRTLKLSGDTLLNYEGNVAWPLQLHLIFNVWVMDQDGEKHEWLKKITFNIEPWKSSSRYLDVRGTTHTGEFILAPSHYPDDEFYVFHYNLGKNSFTKKKLQVRIYNVRIVSTSSIIGLYLSFSLL.

The segment at 1 to 23 (MRTRSKKTKTVNNNNDLQKSEEK) is disordered. In terms of domain architecture, F-box spans 24-71 (QKFDQLPLDLEIEMFRRLPLKSVARFLTLSKSCATTIRSPSFITSFPS).

This chain is Putative F-box protein At1g26510, found in Arabidopsis thaliana (Mouse-ear cress).